The primary structure comprises 612 residues: Citryl-spermidine/3,4-dihydroxybenzoyl-citryl-spermidine:spermidine ligase (612 aa).

ATP contacts are provided by residues 282 to 284, lysine 298, arginine 310, tyrosine 390, and glutamate 461; that span reads SMR.

It belongs to the IucA/IucC family. In terms of assembly, homodimer.

It carries out the reaction N(8)-citryl-spermidine + spermidine + ATP = N(8),N'(8)-citryl-bis(spermidine) + AMP + diphosphate + H(+). The enzyme catalyses N(1)-(3,4-dihydroxybenzoyl)-N(8)-citryl-spermidine + spermidine + ATP = N(1)-(3,4-dihydroxybenzoyl)-N(8),N'(8)-citryl-bis(spermidine) + AMP + diphosphate + H(+). It participates in siderophore biosynthesis; petrobactin biosynthesis. Involved in the biosynthesis of petrobactin, a catecholate siderophore that functions in both iron acquisition and virulence. Catalyzes the ATP-dependent condensation of spermidine with N(8)-citryl-spermidine or N(1)-(3,4-dihydroxbenzoyl)-N(8)-citryl-spermidine, two intermediates in petrobactin biosynthesis pathway. This chain is Citryl-spermidine/3,4-dihydroxybenzoyl-citryl-spermidine:spermidine ligase, found in Bacillus anthracis.